A 382-amino-acid polypeptide reads, in one-letter code: uncharacterized protein (382 aa).

12 helical membrane passes run 8–28 (VMLL…LNTL), 45–65 (MVSS…GYLI), 75–95 (YLAS…VGFW), 102–122 (FIAG…LMCS), 131–151 (LLAA…LLVS), 157–177 (LLHV…PLLF), 204–224 (LGVN…GLMP), 231–251 (GMAN…GILG), 270–290 (VQVF…AMAP), 291–311 (ALFI…AWAC), 325–345 (ALLL…AMLM), and 349–369 (SDNL…LMLL).

It belongs to the major facilitator superfamily. YcaD (TC 2.A.1.26) family.

It localises to the cell inner membrane. This is an uncharacterized protein from Salmonella enteritidis PT4 (strain P125109).